A 546-amino-acid polypeptide reads, in one-letter code: Chaperonin GroEL (546 aa).

Residues 29–32 (TMGP), Lys50, 86–90 (DGTTT), Gly414, and Asp492 each bind ATP.

This sequence belongs to the chaperonin (HSP60) family. As to quaternary structure, forms a cylinder of 14 subunits composed of two heptameric rings stacked back-to-back. Interacts with the co-chaperonin GroES.

Its subcellular location is the cytoplasm. The enzyme catalyses ATP + H2O + a folded polypeptide = ADP + phosphate + an unfolded polypeptide.. Its function is as follows. Together with its co-chaperonin GroES, plays an essential role in assisting protein folding. The GroEL-GroES system forms a nano-cage that allows encapsulation of the non-native substrate proteins and provides a physical environment optimized to promote and accelerate protein folding. This Helicobacter pylori (strain G27) protein is Chaperonin GroEL.